A 142-amino-acid chain; its full sequence is Large ribosomal subunit protein uL13 (142 aa).

It belongs to the universal ribosomal protein uL13 family. Part of the 50S ribosomal subunit.

In terms of biological role, this protein is one of the early assembly proteins of the 50S ribosomal subunit, although it is not seen to bind rRNA by itself. It is important during the early stages of 50S assembly. This Desulfotalea psychrophila (strain LSv54 / DSM 12343) protein is Large ribosomal subunit protein uL13.